Consider the following 277-residue polypeptide: Type II restriction enzyme RsrI (277 aa).

It belongs to the EcoRI type II restriction endonuclease family. In terms of assembly, homodimer. The cofactor is Mg(2+).

The enzyme catalyses Endonucleolytic cleavage of DNA to give specific double-stranded fragments with terminal 5'-phosphates.. A P subtype restriction enzyme that recognizes the double-stranded sequence 5'-GAATTC-3' and cleaves after G-1. The protein is Type II restriction enzyme RsrI (rsrIR) of Cereibacter sphaeroides (Rhodobacter sphaeroides).